The chain runs to 197 residues: Allatostatins (197 aa).

The N-terminal stretch at 1–27 is a signal peptide; the sequence is MRSRTSVLTSSLAFLYFFGIVGRSALA. The propeptide occupies 28-56; the sequence is MEETPASSMNLQHYNNMLNPMVFDDTMPE. The residue at position 76 (Ile76) is an Isoleucine amide. Residues 80 to 86 constitute a propeptide that is removed on maturation; sequence WIDTNDN. Leu96, Leu106, Leu154, and Leu184 each carry leucine amide. Residues 161 to 197 form a disordered region; that stretch reads YSGGQPLGSKRPNDMLSQRYHFGLGKRMSEDEEESSQ. Residues 188 to 197 constitute a propeptide that is removed on maturation; that stretch reads MSEDEEESSQ.

It belongs to the allatostatin family.

It is found in the secreted. Functionally, neuropeptides. In Apis mellifera (Honeybee), this protein is Allatostatins.